We begin with the raw amino-acid sequence, 301 residues long: Phosphatidylglycerol--prolipoprotein diacylglyceryl transferase (301 aa).

4 consecutive transmembrane segments (helical) span residues 10–30, 57–77, 92–112, and 119–139; these read IAFS…LASF, LLFY…MLFY, VWEG…AVAW, and LQMF…LGFG. Arg140 contributes to the a 1,2-diacyl-sn-glycero-3-phospho-(1'-sn-glycerol) binding site. 3 helical membrane-spanning segments follow: residues 202–222, 230–250, and 264–284; these read PSQL…LWLF, YAVS…VEFV, and LTRG…LFWL.

This sequence belongs to the Lgt family.

The protein localises to the cell inner membrane. It carries out the reaction L-cysteinyl-[prolipoprotein] + a 1,2-diacyl-sn-glycero-3-phospho-(1'-sn-glycerol) = an S-1,2-diacyl-sn-glyceryl-L-cysteinyl-[prolipoprotein] + sn-glycerol 1-phosphate + H(+). It participates in protein modification; lipoprotein biosynthesis (diacylglyceryl transfer). In terms of biological role, catalyzes the transfer of the diacylglyceryl group from phosphatidylglycerol to the sulfhydryl group of the N-terminal cysteine of a prolipoprotein, the first step in the formation of mature lipoproteins. This is Phosphatidylglycerol--prolipoprotein diacylglyceryl transferase from Xylella fastidiosa (strain 9a5c).